The primary structure comprises 146 residues: Hemoglobin cathodic subunit beta (146 aa).

Residues 2–146 (EWSSSERSTI…LIHALSRQYF (145 aa)) enclose the Globin domain. The heme b site is built by histidine 63 and histidine 92.

The protein belongs to the globin family. Heterotetramer of two alpha chains and two beta chains. In terms of tissue distribution, red blood cells.

Involved in oxygen transport from gills to the various peripheral tissues. This chain is Hemoglobin cathodic subunit beta, found in Gymnothorax unicolor (Brown moray).